Reading from the N-terminus, the 316-residue chain is 4-hydroxy-3-methylbut-2-enyl diphosphate reductase (316 aa).

Residue Cys12 coordinates [4Fe-4S] cluster. Positions 43 and 81 each coordinate (2E)-4-hydroxy-3-methylbut-2-enyl diphosphate. Dimethylallyl diphosphate contacts are provided by His43 and His81. Residues His43 and His81 each contribute to the isopentenyl diphosphate site. Position 103 (Cys103) interacts with [4Fe-4S] cluster. A (2E)-4-hydroxy-3-methylbut-2-enyl diphosphate-binding site is contributed by His131. Dimethylallyl diphosphate is bound at residue His131. His131 is an isopentenyl diphosphate binding site. Glu133 (proton donor) is an active-site residue. Thr170 serves as a coordination point for (2E)-4-hydroxy-3-methylbut-2-enyl diphosphate. Cys198 serves as a coordination point for [4Fe-4S] cluster. (2E)-4-hydroxy-3-methylbut-2-enyl diphosphate-binding residues include Ser226, Asn228, and Ser271. Residues Ser226, Asn228, and Ser271 each contribute to the dimethylallyl diphosphate site. Positions 226, 228, and 271 each coordinate isopentenyl diphosphate.

It belongs to the IspH family. The cofactor is [4Fe-4S] cluster.

The enzyme catalyses isopentenyl diphosphate + 2 oxidized [2Fe-2S]-[ferredoxin] + H2O = (2E)-4-hydroxy-3-methylbut-2-enyl diphosphate + 2 reduced [2Fe-2S]-[ferredoxin] + 2 H(+). It catalyses the reaction dimethylallyl diphosphate + 2 oxidized [2Fe-2S]-[ferredoxin] + H2O = (2E)-4-hydroxy-3-methylbut-2-enyl diphosphate + 2 reduced [2Fe-2S]-[ferredoxin] + 2 H(+). It participates in isoprenoid biosynthesis; dimethylallyl diphosphate biosynthesis; dimethylallyl diphosphate from (2E)-4-hydroxy-3-methylbutenyl diphosphate: step 1/1. The protein operates within isoprenoid biosynthesis; isopentenyl diphosphate biosynthesis via DXP pathway; isopentenyl diphosphate from 1-deoxy-D-xylulose 5-phosphate: step 6/6. Functionally, catalyzes the conversion of 1-hydroxy-2-methyl-2-(E)-butenyl 4-diphosphate (HMBPP) into a mixture of isopentenyl diphosphate (IPP) and dimethylallyl diphosphate (DMAPP). Acts in the terminal step of the DOXP/MEP pathway for isoprenoid precursor biosynthesis. In Bacillus cereus (strain B4264), this protein is 4-hydroxy-3-methylbut-2-enyl diphosphate reductase.